Here is a 139-residue protein sequence, read N- to C-terminus: Acidic phospholipase A2 S1E6-c (139 aa).

Positions 1 to 16 are cleaved as a signal peptide; that stretch reads MRTLWILAVLLVGVEG. 7 disulfides stabilise this stretch: C42–C132, C44–C60, C59–C111, C65–C139, C66–C104, C73–C97, and C91–C102. Ca(2+)-binding residues include Y43, G45, and G47. The active site involves H63. D64 is a binding site for Ca(2+). D105 is an active-site residue.

This sequence belongs to the phospholipase A2 family. Group II subfamily. D49 sub-subfamily. In terms of assembly, homodimer. The cofactor is Ca(2+). Expressed by the venom gland.

Its subcellular location is the secreted. It carries out the reaction a 1,2-diacyl-sn-glycero-3-phosphocholine + H2O = a 1-acyl-sn-glycero-3-phosphocholine + a fatty acid + H(+). Snake venom phospholipase A2 (PLA2) that inhibits ADP-induced platelet aggregation. PLA2 catalyzes the calcium-dependent hydrolysis of the 2-acyl groups in 3-sn-phosphoglycerides. The sequence is that of Acidic phospholipase A2 S1E6-c from Calloselasma rhodostoma (Malayan pit viper).